A 484-amino-acid polypeptide reads, in one-letter code: Probable cytochrome P450 508A1 (484 aa).

Residues 1–21 (MALFEIIISLFVVYIIHNAIS) traverse the membrane as a helical segment. Residue cysteine 428 coordinates heme.

Belongs to the cytochrome P450 family. Requires heme as cofactor.

The protein localises to the membrane. The sequence is that of Probable cytochrome P450 508A1 (cyp508A1-1) from Dictyostelium discoideum (Social amoeba).